Here is a 985-residue protein sequence, read N- to C-terminus: SWI/SNF complex subunit SWI3D (985 aa).

Residues 1–55 (MEEKRRDSAGTLAFAGSSGDSPASEPMPAPRRRGGGLKRKANALGGSNFFSSAPS) form a disordered region. The segment covering 30–41 (PRRRGGGLKRKA) has biased composition (basic residues). Positions 108–133 (EKPKEEEERNKAIREWEALEAKIEAD) form a coiled coil. Residues 145–242 (HVVPNHCGWF…FHPFPPTDTG (98 aa)) form the SWIRM domain. The ZZ-type; degenerate zinc-finger motif lies at 305-359 (AVEYHCNSCSADCSRKRYHCPKQADFDLCTECFNSGKFSSDMSSSDFILMEPAEA). Residues Cys-310, Cys-313, Cys-333, and Cys-336 each contribute to the Zn(2+) site. An SANT domain is found at 362–413 (VGSGKWTDQETLLLLEALEIFKENWNEIAEHVATKTKAQCMLHFLQMPIEDA). Basic and acidic residues-rich tracts occupy residues 428–464 (TTDL…KEVP), 493–502 (AEQKTPKLET), and 615–661 (DNSH…EKQP). Disordered stretches follow at residues 428–502 (TTDL…KLET) and 591–814 (EDPP…EGKK). The span at 662 to 671 (GSRTENSTTK) shows a compositional bias: polar residues. The segment covering 703–724 (CSGKELQEPLKDGNKLSSENKD) has biased composition (basic and acidic residues). Residues 725–736 (ASQSTVSQSAAD) are compositionally biased toward polar residues. A compositionally biased stretch (basic and acidic residues) spans 742 to 776 (ASRDVEMKDTLQSEKDPEDVVKTVGEKVQLAKEEG). Positions 780–800 (VLSTPDKSVSQQPIGSASAPE) are enriched in polar residues. Residues 839-900 (ISAAAVKAKN…EQLERSRQRL (62 aa)) are a coiled coil. The disordered stretch occupies residues 944–985 (MAFPRPPMPRPPGFPVPGSFVAATTMTGSSDPSPGSDNVSSV). Positions 947–958 (PRPPMPRPPGFP) are enriched in pro residues. Over residues 965–985 (AATTMTGSSDPSPGSDNVSSV) the composition is skewed to polar residues.

As to quaternary structure, interacts with SWI3B, but not with BSH. Component of a RNA-directed DNA methylation (RdDM) complex that contains at least MORC6, MORC1/CRT1, MORC2, SWI3D and SUVH9. Interacts with MORC6 and SUVH9. In terms of tissue distribution, ubiquitously expressed.

The protein localises to the nucleus. Its function is as follows. Component of a multiprotein complex equivalent of the SWI/SNF complex, an ATP-dependent chromatin-remodeling complex, which is required for the positive and negative regulation of gene expression of a large number of genes. It changes chromatin structure by altering DNA-histone contacts within a nucleosome, leading eventually to a change in nucleosome position, thus facilitating or repressing binding of gene-specific transcription factors. The sequence is that of SWI/SNF complex subunit SWI3D (SWI3D) from Arabidopsis thaliana (Mouse-ear cress).